Reading from the N-terminus, the 418-residue chain is Serine hydroxymethyltransferase (418 aa).

Residues Leu121 and 125–127 contribute to the (6S)-5,6,7,8-tetrahydrofolate site; that span reads GHL. Residue Lys230 is modified to N6-(pyridoxal phosphate)lysine. Position 355–357 (355–357) interacts with (6S)-5,6,7,8-tetrahydrofolate; that stretch reads SPF.

It belongs to the SHMT family. In terms of assembly, homodimer. It depends on pyridoxal 5'-phosphate as a cofactor.

Its subcellular location is the cytoplasm. It catalyses the reaction (6R)-5,10-methylene-5,6,7,8-tetrahydrofolate + glycine + H2O = (6S)-5,6,7,8-tetrahydrofolate + L-serine. It functions in the pathway one-carbon metabolism; tetrahydrofolate interconversion. The protein operates within amino-acid biosynthesis; glycine biosynthesis; glycine from L-serine: step 1/1. Its function is as follows. Catalyzes the reversible interconversion of serine and glycine with tetrahydrofolate (THF) serving as the one-carbon carrier. This reaction serves as the major source of one-carbon groups required for the biosynthesis of purines, thymidylate, methionine, and other important biomolecules. Also exhibits THF-independent aldolase activity toward beta-hydroxyamino acids, producing glycine and aldehydes, via a retro-aldol mechanism. This is Serine hydroxymethyltransferase from Streptococcus pyogenes serotype M49 (strain NZ131).